The chain runs to 177 residues: Large ribosomal subunit protein uL6 (177 aa).

The segment at 151–177 (KRPPEPYKGKGVKYADEHIRRKEGKKS) is disordered. A compositionally biased stretch (basic and acidic residues) spans 152–177 (RPPEPYKGKGVKYADEHIRRKEGKKS).

Belongs to the universal ribosomal protein uL6 family. In terms of assembly, part of the 50S ribosomal subunit.

In terms of biological role, this protein binds to the 23S rRNA, and is important in its secondary structure. It is located near the subunit interface in the base of the L7/L12 stalk, and near the tRNA binding site of the peptidyltransferase center. In Fusobacterium nucleatum subsp. nucleatum (strain ATCC 25586 / DSM 15643 / BCRC 10681 / CIP 101130 / JCM 8532 / KCTC 2640 / LMG 13131 / VPI 4355), this protein is Large ribosomal subunit protein uL6.